Reading from the N-terminus, the 87-residue chain is U3-theraphotoxin-Hhn1a 10 (87 aa).

Positions 1-24 are cleaved as a signal peptide; sequence MVNMEASMFLTFAGLVLLFVVCYA. Positions 25 to 52 are excised as a propeptide; the sequence is SESEEKEFPKEMLSSIFAVDNDFKQEER. 3 cysteine pairs are disulfide-bonded: C54-C67, C61-C72, and C66-C79.

It belongs to the neurotoxin 10 (Hwtx-1) family. 51 (Hntx-8) subfamily. Hntx-8 sub-subfamily. Expressed by the venom gland.

The protein resides in the secreted. In terms of biological role, ion channel inhibitor. This is U3-theraphotoxin-Hhn1a 10 from Cyriopagopus hainanus (Chinese bird spider).